Reading from the N-terminus, the 357-residue chain is GDP-mannose transporter 2 (357 aa).

Residues 1-33 lie on the Cytoplasmic side of the membrane; sequence MASARNGVSKDELLPVYERRSQRDGDISGSVKS. The chain crosses the membrane as a helical span at residues 34–54; the sequence is FASTIGNSASAAVLAYCLSSI. Residues 55–68 are Lumenal-facing; it reads SMTLVNKYVVSGAS. The helical transmembrane segment at 69–89 threads the bilayer; the sequence is WNLSFLYLAMQSFIGTVAILA. Residues 90–107 lie on the Cytoplasmic side of the membrane; the sequence is CKKTGLIQNLALFDLKKA. The chain crosses the membrane as a helical span at residues 108-128; the sequence is QTWLPISLLLVGMIYTGNKAL. Gln-129 is a topological domain (lumenal). A helical membrane pass occupies residues 130–150; that stretch reads FLSVPVYTIFKNLTIIVIAYG. The Cytoplasmic portion of the chain corresponds to 151–161; the sequence is EVLMVGGGVKP. A helical transmembrane segment spans residues 162-181; it reads LALLSFGLMVLSSVVAAWAD. Residues 182 to 196 are Lumenal-facing; it reads IQNATTATVGASSDS. N-linked (GlcNAc...) asparagine glycosylation is present at Asn-184. The chain crosses the membrane as a helical span at residues 197-217; the sequence is TAAALSALNAGYAWMGTNVIF. The Cytoplasmic portion of the chain corresponds to 218-236; the sequence is SASYALGMRRVIKKTNFDN. A helical membrane pass occupies residues 237–257; sequence WDVMFYNNLLSIPILLLASVL. Residues 258 to 277 are Lumenal-facing; sequence AEDWSSENLQRNFPAELRQS. Residues 278–298 form a helical membrane-spanning segment; sequence LFIGILYSGVAAVFISYCTAW. Residues 299–306 are Cytoplasmic-facing; the sequence is CVRATSST. Residues 307 to 327 form a helical membrane-spanning segment; that stretch reads TYAMVGALNKLPLAVAGIVFF. The Lumenal portion of the chain corresponds to 328-332; the sequence is AAPVT. A helical transmembrane segment spans residues 333 to 352; sequence FGSVSAIVLGFISGLVYARA. Over 353–357 the chain is Cytoplasmic; that stretch reads KSTGA.

Belongs to the TPT transporter family. SLC35D subfamily. Homooligomer.

The protein resides in the golgi apparatus membrane. It is found in the cytoplasmic vesicle membrane. Its subcellular location is the endoplasmic reticulum membrane. Involved in the import of GDP-mannose from the cytoplasm into the Golgi lumen. The protein is GDP-mannose transporter 2 (gmt2) of Neosartorya fischeri (strain ATCC 1020 / DSM 3700 / CBS 544.65 / FGSC A1164 / JCM 1740 / NRRL 181 / WB 181) (Aspergillus fischerianus).